The primary structure comprises 348 residues: D-erythrose-4-phosphate dehydrogenase (348 aa).

NAD(+) is bound by residues 12–13 (RI) and arginine 81. Substrate contacts are provided by residues 154–156 (SCT), arginine 200, 213–214 (TK), and arginine 236. Cysteine 155 acts as the Nucleophile in catalysis. Asparagine 318 is an NAD(+) binding site.

It belongs to the glyceraldehyde-3-phosphate dehydrogenase family. Epd subfamily. Homotetramer.

Its subcellular location is the cytoplasm. The enzyme catalyses D-erythrose 4-phosphate + NAD(+) + H2O = 4-phospho-D-erythronate + NADH + 2 H(+). Its pathway is cofactor biosynthesis; pyridoxine 5'-phosphate biosynthesis; pyridoxine 5'-phosphate from D-erythrose 4-phosphate: step 1/5. Its function is as follows. Catalyzes the NAD-dependent conversion of D-erythrose 4-phosphate to 4-phosphoerythronate. The polypeptide is D-erythrose-4-phosphate dehydrogenase (Salmonella paratyphi B (strain ATCC BAA-1250 / SPB7)).